A 418-amino-acid polypeptide reads, in one-letter code: Hydroxysqualene dehydroxylase (418 aa).

Belongs to the HpnE family.

The enzyme catalyses squalene + FAD + H2O + H(+) = hydroxysqualene + FADH2. Its pathway is secondary metabolite biosynthesis; hopanoid biosynthesis. Its function is as follows. Involved in the biosynthesis of the hopanoid precursor squalene (SQ) from farnesyl diphosphate (FPP). Catalyzes the third (last) step, the reduction of hydroxysqualene (HSQ) to SQ. In Rhodopseudomonas palustris (strain ATCC BAA-98 / CGA009), this protein is Hydroxysqualene dehydroxylase.